The primary structure comprises 482 residues: NAD(+) hydrolase ThsA (482 aa).

One can recognise a Deacetylase sirtuin-type domain in the interval 3–281 (EHEQKIMIDR…EEITKRFRCK (279 aa)). Residues aspartate 112 and histidine 150 each coordinate NAD(+). Histidine 150 serves as the catalytic Proton acceptor. The SLOG (STALD) domain stretch occupies residues 282-482 (NVFLSGSAHE…SKIHDVIKLI (201 aa)). The 3'cADPR site is built by glycine 287, serine 288, leucine 324, phenylalanine 355, arginine 373, lysine 390, glycine 407, and glutamate 411.

It belongs to the soluble Thoeris ThsA family. As to quaternary structure, homotetramer in solution.

It catalyses the reaction NAD(+) + H2O = ADP-D-ribose + nicotinamide + H(+). Its activity is regulated as follows. In vivo probably activated by a cyclic ADP-D-ribose generated by ThsB (might be 3'cADPR). Its function is as follows. NAD(+) hydrolyzing component (NADase) of the Thoeris antiviral defense system, composed of ThsA and ThsB (maybe J591_1492). As purified, has NADase activity that is not activated by any tested cADPR isomers; binds 3'cADPR better than 2'cADPR. It was suggested the purified protein is already in a fully active state. Upon activation binds and hydrolyzes NAD(+), leading to cell death and inhibition of phage replication. The polypeptide is NAD(+) hydrolase ThsA (Acinetobacter baumannii (strain 532279)).